The primary structure comprises 298 residues: Pyridoxal kinase PdxY (298 aa).

Ser-17 contributes to the substrate binding site. Asp-119 and Glu-156 together coordinate ATP. Substrate is bound at residue Asp-234.

This sequence belongs to the pyridoxine kinase family. PdxY subfamily. In terms of assembly, homodimer. Mg(2+) is required as a cofactor.

It catalyses the reaction pyridoxal + ATP = pyridoxal 5'-phosphate + ADP + H(+). The protein operates within cofactor metabolism; pyridoxal 5'-phosphate salvage; pyridoxal 5'-phosphate from pyridoxal: step 1/1. In terms of biological role, pyridoxal kinase involved in the salvage pathway of pyridoxal 5'-phosphate (PLP). Catalyzes the phosphorylation of pyridoxal to PLP. The protein is Pyridoxal kinase PdxY of Deinococcus radiodurans (strain ATCC 13939 / DSM 20539 / JCM 16871 / CCUG 27074 / LMG 4051 / NBRC 15346 / NCIMB 9279 / VKM B-1422 / R1).